We begin with the raw amino-acid sequence, 250 residues long: UDP-2,3-diacylglucosamine hydrolase (250 aa).

Asp8, His10, Asp41, Asn79, and His114 together coordinate Mn(2+). 79-80 (NR) contributes to the substrate binding site. Residues Asp122, Ser160, Gln167, and His195 each contribute to the substrate site. Residues His195 and His197 each coordinate Mn(2+).

This sequence belongs to the LpxH family. It depends on Mn(2+) as a cofactor.

The protein resides in the cell inner membrane. The enzyme catalyses UDP-2-N,3-O-bis[(3R)-3-hydroxytetradecanoyl]-alpha-D-glucosamine + H2O = 2-N,3-O-bis[(3R)-3-hydroxytetradecanoyl]-alpha-D-glucosaminyl 1-phosphate + UMP + 2 H(+). The protein operates within glycolipid biosynthesis; lipid IV(A) biosynthesis; lipid IV(A) from (3R)-3-hydroxytetradecanoyl-[acyl-carrier-protein] and UDP-N-acetyl-alpha-D-glucosamine: step 4/6. Its function is as follows. Hydrolyzes the pyrophosphate bond of UDP-2,3-diacylglucosamine to yield 2,3-diacylglucosamine 1-phosphate (lipid X) and UMP by catalyzing the attack of water at the alpha-P atom. Involved in the biosynthesis of lipid A, a phosphorylated glycolipid that anchors the lipopolysaccharide to the outer membrane of the cell. This Nitrosococcus oceani (strain ATCC 19707 / BCRC 17464 / JCM 30415 / NCIMB 11848 / C-107) protein is UDP-2,3-diacylglucosamine hydrolase.